A 330-amino-acid chain; its full sequence is Clp protease adapter protein ClpF, chloroplastic (330 aa).

The N-terminal 65 residues, 1–65 (MVQSQSLSTL…KSLKQRNLLR (65 aa)), are a transit peptide targeting the chloroplast. Residues 66-138 (VEARWPFQGG…VEEESIRLQE (73 aa)) form an NTD, required for CLPS1-binding region. 2 coiled-coil regions span residues 112 to 139 (NLEQYDIAQQLREKLTEVEEESIRLQEG) and 175 to 195 (AAKLRDEISKLEAESLAVSAK). The 36-residue stretch at 153–188 (GISIIRLRADLQNAIDSEDYGLAAKLRDEISKLEAE) folds into the UVR domain. Positions 203-310 (EYAFRLGQKL…TAGDFIPVKQ (108 aa)) are yccV-like.

As to quaternary structure, binds to CLPC1 and CLPC2. Interacts with ClpS1; this interaction stimulates their association with ClpC. Associates with the Clp substrate HEMA1 (GluTR). As to expression, expressed constitutively in photosynthetic tissues such as leaves, stems and flowers, and, at low levels, in siliques.

Its subcellular location is the plastid. The protein resides in the chloroplast. Clp protease adapter that facilitates CLPS1 recruitment to ClpC chaperones thus forming a binary adapter for selective substrate recognition and delivery to plastid Clp protease system (CLPC). This is Clp protease adapter protein ClpF, chloroplastic from Arabidopsis thaliana (Mouse-ear cress).